A 406-amino-acid chain; its full sequence is MNDAPTPNSFRAGPDEDGRFGIYGGRFVAETLMPLILDLQAEWDKAKSDPEFQAELKYLGTHYTGRPSPLYFAERLTAELGGAKIYFKREELNHTGSHKINNCLGQILLAKRMGKTRIIAETGAGQHGVASATVAARFGLPCVVYMGATDVARQAPNVFRMKLLGAEVKPVTAGHGTLKDAMNEALRDWVTNVDDTYYLIGTAAGPHPYPEMVRDFQAVIGEEAKAQMLEAEGRLPDMIIAAVGGGSNAIGIFHPFLDDKNVRIVGVEAGGKGLSGEEHCASITAGSPGVLHGNRTYLLQDGDGQIKEGHSISAGLDYPGIGPEHSWLNDIGRVEYVPIMDHEALDAFQMLTRLEGIIPALEPSHALAEVIKRAPKMGKDEIILMNLSGRGDKDVHTVSKFLGMDV.

Position 99 is an N6-(pyridoxal phosphate)lysine (K99).

This sequence belongs to the TrpB family. In terms of assembly, tetramer of two alpha and two beta chains. The cofactor is pyridoxal 5'-phosphate.

It carries out the reaction (1S,2R)-1-C-(indol-3-yl)glycerol 3-phosphate + L-serine = D-glyceraldehyde 3-phosphate + L-tryptophan + H2O. It functions in the pathway amino-acid biosynthesis; L-tryptophan biosynthesis; L-tryptophan from chorismate: step 5/5. The beta subunit is responsible for the synthesis of L-tryptophan from indole and L-serine. This Agrobacterium fabrum (strain C58 / ATCC 33970) (Agrobacterium tumefaciens (strain C58)) protein is Tryptophan synthase beta chain (trpB).